The chain runs to 429 residues: Glutamate-1-semialdehyde 2,1-aminomutase (429 aa).

Residue Lys-267 is modified to N6-(pyridoxal phosphate)lysine.

It belongs to the class-III pyridoxal-phosphate-dependent aminotransferase family. HemL subfamily. As to quaternary structure, homodimer. Requires pyridoxal 5'-phosphate as cofactor.

It localises to the cytoplasm. The enzyme catalyses (S)-4-amino-5-oxopentanoate = 5-aminolevulinate. Its pathway is porphyrin-containing compound metabolism; protoporphyrin-IX biosynthesis; 5-aminolevulinate from L-glutamyl-tRNA(Glu): step 2/2. The polypeptide is Glutamate-1-semialdehyde 2,1-aminomutase (Xanthomonas oryzae pv. oryzae (strain PXO99A)).